The chain runs to 683 residues: DNA ligase (683 aa).

Residues 35-39 (DADYD), 84-85 (SL), and Glu115 contribute to the NAD(+) site. Lys117 (N6-AMP-lysine intermediate) is an active-site residue. Positions 138, 175, 293, and 317 each coordinate NAD(+). Zn(2+) is bound by residues Cys411, Cys414, Cys429, and Cys435. A BRCT domain is found at 598–683 (QTNSAVSGKT…LQNISTGAQQ (86 aa)).

It belongs to the NAD-dependent DNA ligase family. LigA subfamily. It depends on Mg(2+) as a cofactor. Requires Mn(2+) as cofactor.

The catalysed reaction is NAD(+) + (deoxyribonucleotide)n-3'-hydroxyl + 5'-phospho-(deoxyribonucleotide)m = (deoxyribonucleotide)n+m + AMP + beta-nicotinamide D-nucleotide.. Its function is as follows. DNA ligase that catalyzes the formation of phosphodiester linkages between 5'-phosphoryl and 3'-hydroxyl groups in double-stranded DNA using NAD as a coenzyme and as the energy source for the reaction. It is essential for DNA replication and repair of damaged DNA. This is DNA ligase from Nitrosomonas eutropha (strain DSM 101675 / C91 / Nm57).